Consider the following 135-residue polypeptide: Small ribosomal subunit protein eS6 (135 aa).

It belongs to the eukaryotic ribosomal protein eS6 family.

The chain is Small ribosomal subunit protein eS6 from Halorubrum lacusprofundi (strain ATCC 49239 / DSM 5036 / JCM 8891 / ACAM 34).